We begin with the raw amino-acid sequence, 657 residues long: MEHSGTSEVTGADTAGPDPQLAVTMGFTGFGKKARTFDLEAMFEQTRRTAVERSRKTLEAREKEEEMNREKELRKQIEDMEPAPSSSSAARERSQSSCRDTSSSDSESDDSSDSSDDELIGPPLPPKMVGESVTTVDEGTLGPLPPPLCEEGEDDDDDELDDEGEEDNPVQRIPDSHEITLRHGTKTVSALGLDPSGARLVTGGYDYDVKFWDFAGMDASFKAFRSLQPCECHQIKSLQYSNTGDMILVVSGSSQAKVIDRDGFEVMECIKGDQYIVDMANTKGHTAMLHTDSWHPKIKGEFMTCSNDATVRLWEVENPKKQKSVFKPRTMQGKKVIPTTCTYSRDGNLVAAACQNGSIQIWDRNLTVHPKFHYKQAHDPGTDTSCVAFSYDGNVLASRGGDDTLKLWDVRQFNKPLFSASDLPTLFPMTDCCFSPDDKLIVTGTSVQRGCGSGKLVFLERRTFQRVYEIHITDASVVRCLWHPKLNQIMVGTGNGLAKVYYDPNKSQRGAKLCVVKTQRKAKQAETLTQDYIITPHALPMFREPRQRSTRKQLEKDRLDPLKSHKPEPPVAGPGRGGRVGTHGGTLSSYIVKNIALDKTDDSNPREAILRHAKAAEDNPYWVSPAYSKTQPKTMFAQVESDDEESKNEPEWKKRKI.

2 disordered regions span residues 1–21 (MEHS…DPQL) and 43–172 (FEQT…PVQR). Basic and acidic residues predominate over residues 45-78 (QTRRTAVERSRKTLEAREKEEEMNREKELRKQIE). Residues 82–105 (PAPSSSSAARERSQSSCRDTSSSD) show a composition bias toward low complexity. Composition is skewed to acidic residues over residues 106–119 (SESD…DDEL) and 150–168 (EEGE…EEDN). WD repeat units follow at residues 183 to 222 (HGTK…ASFK), 230 to 271 (CECH…ECIK), 284 to 324 (GHTA…KQKS), 333 to 372 (GKKV…HPKF), 379 to 418 (DPGT…KPLF), 424 to 469 (PTLF…RVYE), and 472 to 511 (ITDA…QRGA). Residue Lys-299 forms a Glycyl lysine isopeptide (Lys-Gly) (interchain with G-Cter in SUMO2) linkage. Lys-455 bears the N6-acetyllysine mark. The span at 543-568 (REPRQRSTRKQLEKDRLDPLKSHKPE) shows a compositional bias: basic and acidic residues. Residues 543 to 584 (REPRQRSTRKQLEKDRLDPLKSHKPEPPVAGPGRGGRVGTHG) are disordered. Positions 574 to 584 (PGRGGRVGTHG) are enriched in gly residues. Position 582 is a phosphothreonine (Thr-582). Residues Lys-593 and Lys-599 each participate in a glycyl lysine isopeptide (Lys-Gly) (interchain with G-Cter in SUMO2) cross-link. Ser-624 and Ser-641 each carry phosphoserine. The interval 634–657 (TMFAQVESDDEESKNEPEWKKRKI) is disordered. A compositionally biased stretch (basic and acidic residues) spans 647 to 657 (KNEPEWKKRKI).

It belongs to the WD repeat GAD-1 family.

This chain is WD repeat-containing protein 70 (Wdr70), found in Mus musculus (Mouse).